A 932-amino-acid polypeptide reads, in one-letter code: MTNERKEVSEAPVNFGANLGLMLDLYDDFLQDPSSVPEDLQVLFSIIKNDDSIVPALKSTSSQNSDGTIKRVMRLIDNIRQYGHLKADIYPVNPPKRKHVPKLEIEDFDLDQQTLEGISAGIVSDHFADIYDNAYEAILRMEKRYKGPIAFEYTHINNNTERGWLKRRIETPYKVTLNNNEKRALFKQLAYVEGFEKYLHKNFVGAKRFSIEGVDALVPMLQRTITIAAKEGIKNIQIGMAHRGRLNVLTHVLEKPYEMMISEFMHTDPMKFLPEDGSLQLTAGWTGDVKYHLGGIKTTDSYGTMQRIALANNPSHLEIVAPVVEGRTRAAQDDTQRAGAPTTDHHKAMPIIIHGDAAYPGQGINFETMNLGNLKGYSTGGSLHIITNNRIGFTTEPIDARSTTYSTDVAKGYDVPIFHVNADDVEATIEAIDIAMEFRKEFHKDVVIDLVGYRRFGHNEMDEPSITNPVPYQNIRKHDSVEYVFGKKLVNEGVISEDEMHSFIEQVQKELRQAHDKINKADKMDNPDMEKPADLALPLQADEQSFTFDHLKEINDALLTYPDGFNILKKLNKVLEKRHEPFNKEDGLVDWAQAEQLAFATILQDGTPIRLTGQDSERGTFSHRHAVLHDEQTGETYTPLHHVPDQKATFDIHNSPLSEAAVVGFEYGYNVENKKSFNIWEAQYGDFANMSQMIFDNFLFSSRSKWGERSGLTLFLPHAYEGQGPEHSSARLERFLQLAAENNCTVVNLSSSSNYFHLLRAQAASLDSEQMRPLVVMSPKSLLRNKTVAKPIDEFTSGGFEPILTESYQADKVTKVILATGKMFIDLKEALAKNPDESVLLVAIERLYPFPEEEIEALLAQLPNLEEVSWVQEEPKNQGAWLYVYPYVKVLVADKYDLSYHGRIQRAAPAEGDGEIHKLVQNKIIENALKNN.

The protein belongs to the alpha-ketoglutarate dehydrogenase family. As to quaternary structure, homodimer. Part of the 2-oxoglutarate dehydrogenase (OGDH) complex composed of E1 (2-oxoglutarate dehydrogenase), E2 (dihydrolipoamide succinyltransferase) and E3 (dihydrolipoamide dehydrogenase); the complex contains multiple copies of the three enzymatic components (E1, E2 and E3). The cofactor is thiamine diphosphate.

It catalyses the reaction N(6)-[(R)-lipoyl]-L-lysyl-[protein] + 2-oxoglutarate + H(+) = N(6)-[(R)-S(8)-succinyldihydrolipoyl]-L-lysyl-[protein] + CO2. In terms of biological role, E1 component of the 2-oxoglutarate dehydrogenase (OGDH) complex which catalyzes the decarboxylation of 2-oxoglutarate, the first step in the conversion of 2-oxoglutarate to succinyl-CoA and CO(2). The polypeptide is 2-oxoglutarate dehydrogenase E1 component (Staphylococcus aureus (strain MW2)).